The following is a 1032-amino-acid chain: Kinesin heavy chain isoform 5A (1032 aa).

A2 carries the N-acetylalanine modification. In terms of domain architecture, Kinesin motor spans 9 to 327; that stretch reads SIKVLCRFRP…LMFGQRAKTI (319 aa). 86 to 93 contacts ATP; that stretch reads GQTSSGKT. Residues 174–315 are microtubule-binding; sequence VSSPEEILDV…PSSYNDAETK (142 aa). The necessary for interaction with ZFYVE27 stretch occupies residues 271 to 361; the sequence is EGTKSYVPYR…KTKAQKETIA (91 aa). Positions 331–906 form a coiled coil; that stretch reads ASVNLELTAE…VDRIKEAVRY (576 aa). Residues 353 to 1032 are interaction with BICD2; sequence TKAQKETIAK…FPLHQETAAS (680 aa). T397 is subject to Phosphothreonine. Disordered stretches follow at residues 906–939 and 978–1010; these read YKSS…YGTR and SGAT…RSDL. Positions 907–1032 are globular; it reads KSSGKRGHSA…FPLHQETAAS (126 aa). The span at 978–989 shows a compositional bias: low complexity; the sequence is SGATSSGGPLAS. Over residues 991 to 1003 the composition is skewed to polar residues; sequence QKANMDNGNATDI.

Belongs to the TRAFAC class myosin-kinesin ATPase superfamily. Kinesin family. Kinesin subfamily. In terms of assembly, oligomer composed of two heavy chains and two light chains. Interacts with GRIP1. Interacts with FMR1 (via C-terminus); this interaction is increased in a mGluR-dependent manner. Interacts with ZFYVE27. Interacts with VAPA, VAPB, SURF4, RAB11A (GDP-bound form), RAB11B (GDP-bound form) and RTN3 in a ZFYVE27-dependent manner. Interacts with BORCS5. Interacts with BICD2. Interacts with DTNB. In terms of tissue distribution, distributed throughout the CNS but is highly enriched in subsets of neurons.

It localises to the cytoplasm. The protein localises to the perinuclear region. It is found in the cytoskeleton. The protein resides in the perikaryon. It catalyses the reaction ATP + H2O + a kinesin associated with a microtubule at position (n) = ADP + phosphate a kinesin associated with a microtubule at position (n+1, toward the plus end).. Microtubule-dependent motor required for slow axonal transport of neurofilament proteins (NFH, NFM and NFL). Can induce formation of neurite-like membrane protrusions in non-neuronal cells in a ZFYVE27-dependent manner. The ZFYVE27-KIF5A complex contributes to the vesicular transport of VAPA, VAPB, SURF4, RAB11A, RAB11B and RTN3 proteins in neurons. Required for anterograde axonal transportation of MAPK8IP3/JIP3 which is essential for MAPK8IP3/JIP3 function in axon elongation. The sequence is that of Kinesin heavy chain isoform 5A from Homo sapiens (Human).